Consider the following 239-residue polypeptide: tRNA (guanine-N(7)-)-methyltransferase (239 aa).

Residues Glu68, Glu93, Asp120, and Asp143 each contribute to the S-adenosyl-L-methionine site. Asp143 is a catalytic residue. Residues Lys147, Asp180, and 217-220 (TKFE) each bind substrate.

The protein belongs to the class I-like SAM-binding methyltransferase superfamily. TrmB family.

It carries out the reaction guanosine(46) in tRNA + S-adenosyl-L-methionine = N(7)-methylguanosine(46) in tRNA + S-adenosyl-L-homocysteine. Its pathway is tRNA modification; N(7)-methylguanine-tRNA biosynthesis. Its function is as follows. Catalyzes the formation of N(7)-methylguanine at position 46 (m7G46) in tRNA. The polypeptide is tRNA (guanine-N(7)-)-methyltransferase (Vibrio cholerae serotype O1 (strain ATCC 39315 / El Tor Inaba N16961)).